The primary structure comprises 227 residues: [D-Ala2]-deltorphins (227 aa).

The N-terminal stretch at 1-20 (MSFLKKSLLLVLFLGLVSHS) is a signal peptide. A propeptide spanning residues 21–46 (VCKEEKRETEEENENEEENHEVGSEM) is cleaved from the precursor. The tract at residues 22–227 (CKEEKRETEE…DVVGGEAKKM (206 aa)) is disordered. A compositionally biased stretch (acidic residues) spans 30–39 (EEENENEEEN). Ala-50 carries the post-translational modification D-alanine (Ala). The propeptide occupies 57-75 (DTEEKNENEEENQEEGSEM). Acidic residues predominate over residues 62-72 (NENEEENQEEG). Residues 73-87 (SEMKRYAFGYPKREP) show a composition bias toward basic and acidic residues. Ala-79 carries the post-translational modification D-alanine (Ala). Residues 86–104 (EPEEENENEEENHEEGSEM) constitute a propeptide that is removed on maturation. Over residues 88 to 98 (EEENENEEENH) the composition is skewed to acidic residues. Positions 99 to 108 (EEGSEMKRYA) are enriched in basic and acidic residues. Ala-108 bears the D-alanine (Ala) mark. Gly-113 bears the Glycine amide mark. Positions 115–140 (EAKKMKREPEEENENEEENHEEGSEM) are excised as a propeptide. The segment covering 124 to 134 (EEENENEEENH) has biased composition (acidic residues). A compositionally biased stretch (basic and acidic residues) spans 135-144 (EEGSEMKRYA). At Ala-144 the chain carries D-alanine (Ala). Gly-149 carries the glycine amide modification. A propeptide spanning residues 151-176 (EAKKMKREPEEENENEEENHEEGSEM) is cleaved from the precursor. Residues 160 to 170 (EEENENEEENH) are compositionally biased toward acidic residues. The span at 171 to 180 (EEGSEMKRYA) shows a compositional bias: basic and acidic residues. The residue at position 180 (Ala-180) is a D-alanine (Ala). Gly-185 carries the glycine amide modification. The propeptide occupies 187-212 (EAKKMKREPEEENENEEENHEEGSEM). A compositionally biased stretch (acidic residues) spans 196–206 (EEENENEEENH). The span at 207 to 216 (EEGSEMKRYA) shows a compositional bias: basic and acidic residues. Residue Ala-216 is modified to D-alanine (Ala). The residue at position 221 (Gly-221) is a Glycine amide. Residues 223–227 (EAKKM) constitute a propeptide that is removed on maturation.

Belongs to the frog skin active peptide (FSAP) family. Dermorphin subfamily. As to expression, expressed by the skin glands.

It is found in the secreted. Functionally, deltorphin is a heptapeptide with a very potent opiate-like activity. Has high affinity and selectivity for delta-type opioid receptors. The two dermorphin-like peptides have a similar affinity and selectivity for the mu opioid receptor as dermorphin. In Phyllomedusa bicolor (Two-colored leaf frog), this protein is [D-Ala2]-deltorphins.